Reading from the N-terminus, the 130-residue chain is Small ribosomal subunit protein uS11 (130 aa).

This sequence belongs to the universal ribosomal protein uS11 family. In terms of assembly, part of the 30S ribosomal subunit. Interacts with proteins S7 and S18. Binds to IF-3.

In terms of biological role, located on the platform of the 30S subunit, it bridges several disparate RNA helices of the 16S rRNA. Forms part of the Shine-Dalgarno cleft in the 70S ribosome. The polypeptide is Small ribosomal subunit protein uS11 (Syntrophobacter fumaroxidans (strain DSM 10017 / MPOB)).